The sequence spans 1034 residues: Tubulin glycylase 3D (1034 aa).

Composition is skewed to polar residues over residues 1-13 (MINSHHTSQQTLN) and 131-146 (QVNSVLADNSNIQNDF). 3 disordered regions span residues 1–21 (MINSHHTSQQTLNKESKSQMD), 131–166 (QVNSVLADNSNIQNDFYPQYRKPKNPTTKKRQSTDY), and 189–208 (LNQQNQQQQDLAKNRVDNSQ). Positions 151-161 (RKPKNPTTKKR) are enriched in basic residues. Residues 189 to 199 (LNQQNQQQQDL) show a composition bias toward low complexity. The TTL domain maps to 571 to 930 (DINNVIDDEK…YGMAQKSGIK (360 aa)). Residues 741-744 (QKYI), Lys754, and Asp756 contribute to the ATP site. The tract at residues 1002 to 1034 (HDQKQFSSQQANNIETYSRPQTAKSQTQSSKKL) is disordered.

The protein localises to the cytoplasm. Functionally, probable glycylase which modifies tubulin, generating side chains of glycine on the gamma-carboxyl groups of specific glutamate residues within the C-terminal tail of tubulin. The protein is Tubulin glycylase 3D (TTLL3D) of Tetrahymena thermophila (strain SB210).